A 489-amino-acid polypeptide reads, in one-letter code: Oxysterol-binding protein-related protein 1B (489 aa).

This sequence belongs to the OSBP family. Expressed at low levels in flowers.

In terms of biological role, may be involved in the transport of sterols. In Arabidopsis thaliana (Mouse-ear cress), this protein is Oxysterol-binding protein-related protein 1B (ORP1B).